We begin with the raw amino-acid sequence, 125 residues long: MINSPRVCVQVQSMYIETQSQPESDRYVFAYTITLRNLGRHPVQLIGRYWLITNANGQETEVQGEGVVGEKPRILPGGEFQYTSGAVLETPLGTMQGHYDMVDDQGQGFHVAIPVFRLAIPSLIN.

The region spanning 1–125 is the ApaG domain; the sequence is MINSPRVCVQ…FRLAIPSLIN (125 aa).

This is Protein ApaG from Sodalis glossinidius (strain morsitans).